Consider the following 51-residue polypeptide: Nawaprin (51 aa).

The WAP domain maps to 1–50 (NEKSGSCPDMSMPIPPLGICKTLCNSDSGCPNVQKCCKNGCGFMTCTTPV). Cystine bridges form between C7/C37, C20/C41, C24/C36, and C30/C46.

Expressed by the venom gland.

It localises to the secreted. In terms of biological role, damages membranes of susceptible bacteria. Has no hemolytic activity. Not toxic to mice. Does not inhibit the proteinases elastase and cathepsin G. The polypeptide is Nawaprin (Naja nigricollis (Black-necked spitting cobra)).